The chain runs to 316 residues: tRNA-dihydrouridine(16) synthase (316 aa).

FMN-binding positions include 7–9 and Q68; that span reads PME. C98 serves as the catalytic Proton donor. Residues K139, 200–202, and 224–225 each bind FMN; these read NGE and GR.

This sequence belongs to the Dus family. DusC subfamily. FMN is required as a cofactor.

It carries out the reaction 5,6-dihydrouridine(16) in tRNA + NADP(+) = uridine(16) in tRNA + NADPH + H(+). The enzyme catalyses 5,6-dihydrouridine(16) in tRNA + NAD(+) = uridine(16) in tRNA + NADH + H(+). In terms of biological role, catalyzes the synthesis of 5,6-dihydrouridine (D), a modified base found in the D-loop of most tRNAs, via the reduction of the C5-C6 double bond in target uridines. Specifically modifies U16 in tRNAs. The chain is tRNA-dihydrouridine(16) synthase from Escherichia coli O157:H7.